The chain runs to 114 residues: U17-barytoxin-Tl1d (114 aa).

Positions 1–20 are cleaved as a signal peptide; sequence MKTIIVFLSLLVLATKFGDA. A propeptide spanning residues 21 to 74 is cleaved from the precursor; it reads NEGVNQEQMKEVIQNEFREDFLNEMAAMSLLQQLEAIESTLLEKEADRNSRQKR. 3 disulfides stabilise this stretch: C75-C88, C82-C93, and C87-C108.

This sequence belongs to the neurotoxin 14 (magi-1) family. 03 (ICK-30-40) subfamily. Expressed by the venom gland.

Its subcellular location is the secreted. Its function is as follows. Ion channel inhibitor. The sequence is that of U17-barytoxin-Tl1d from Trittame loki (Brush-footed trapdoor spider).